We begin with the raw amino-acid sequence, 192 residues long: dITP/XTP pyrophosphatase (192 aa).

A substrate-binding site is contributed by 12–17; that stretch reads TNNENK. Mg(2+) is bound by residues Glu41 and Asp70. The active-site Proton acceptor is Asp70. Residues Ser71, 145–148, Lys168, and 173–174 contribute to the substrate site; these read FGFD and HR.

The protein belongs to the HAM1 NTPase family. As to quaternary structure, homodimer. Mg(2+) serves as cofactor.

The enzyme catalyses XTP + H2O = XMP + diphosphate + H(+). It catalyses the reaction dITP + H2O = dIMP + diphosphate + H(+). The catalysed reaction is ITP + H2O = IMP + diphosphate + H(+). In terms of biological role, pyrophosphatase that catalyzes the hydrolysis of nucleoside triphosphates to their monophosphate derivatives, with a high preference for the non-canonical purine nucleotides XTP (xanthosine triphosphate), dITP (deoxyinosine triphosphate) and ITP. Seems to function as a house-cleaning enzyme that removes non-canonical purine nucleotides from the nucleotide pool, thus preventing their incorporation into DNA/RNA and avoiding chromosomal lesions. In Saccharolobus solfataricus (strain ATCC 35092 / DSM 1617 / JCM 11322 / P2) (Sulfolobus solfataricus), this protein is dITP/XTP pyrophosphatase.